Here is a 195-residue protein sequence, read N- to C-terminus: uncharacterized protein (195 aa).

A signal peptide spans 1–21 (MHFSSCVLVSALAIVTNVATA). N-linked (GlcNAc...) asparagine glycans are attached at residues N62 and N109. The tract at residues 119–141 (DWDEDTVTGENAPDSGEPFSTSH) is disordered.

It is found in the secreted. This is an uncharacterized protein from Arthroderma benhamiae (strain ATCC MYA-4681 / CBS 112371) (Trichophyton mentagrophytes).